The primary structure comprises 143 residues: Large ribosomal subunit protein uL16 (143 aa).

A compositionally biased stretch (basic residues) spans 1–17 (MLQPKRTKFRKAHKGRI). The interval 1 to 20 (MLQPKRTKFRKAHKGRIHGN) is disordered.

Belongs to the universal ribosomal protein uL16 family. Part of the 50S ribosomal subunit.

In terms of biological role, binds 23S rRNA and is also seen to make contacts with the A and possibly P site tRNAs. The polypeptide is Large ribosomal subunit protein uL16 (Zymomonas mobilis subsp. mobilis (strain ATCC 31821 / ZM4 / CP4)).